Here is a 1051-residue protein sequence, read N- to C-terminus: Kinesin-like protein KIN-4B (1051 aa).

The interval 1–21 (MESHSSLSSSSSSSPPSSLSS) is disordered. One can recognise a Kinesin motor domain in the interval 25–380 (CVKVAVNVRP…LKYANRARNI (356 aa)). Residue 104–111 (GQTGSGKT) participates in ATP binding. Coiled-coil stretches lie at residues 414–448 (ATSS…RSKR) and 540–644 (RQHF…KMKQ). Over residues 916–925 (SSSYSGSSRS) the composition is skewed to low complexity. 2 disordered regions span residues 916–946 (SSSY…SSTY) and 1029–1051 (MSKS…FQGA).

Belongs to the TRAFAC class myosin-kinesin ATPase superfamily. Kinesin family. KIN-4 subfamily. Homodimer.

Kinesin-like motor protein involved in the control of the oriented deposition of cellulose microfibrils. This is Kinesin-like protein KIN-4B from Arabidopsis thaliana (Mouse-ear cress).